Reading from the N-terminus, the 120-residue chain is Large ribosomal subunit protein uL18 (120 aa).

It belongs to the universal ribosomal protein uL18 family. As to quaternary structure, part of the 50S ribosomal subunit; part of the 5S rRNA/L5/L18/L25 subcomplex. Contacts the 5S and 23S rRNAs.

This is one of the proteins that bind and probably mediate the attachment of the 5S RNA into the large ribosomal subunit, where it forms part of the central protuberance. In Bradyrhizobium sp. (strain ORS 278), this protein is Large ribosomal subunit protein uL18.